The primary structure comprises 562 residues: Arginine--tRNA ligase (562 aa).

The 'HIGH' region motif lies at 129-139 (ANPTGPLHVGH).

The protein belongs to the class-I aminoacyl-tRNA synthetase family. As to quaternary structure, monomer.

It is found in the cytoplasm. The catalysed reaction is tRNA(Arg) + L-arginine + ATP = L-arginyl-tRNA(Arg) + AMP + diphosphate. The sequence is that of Arginine--tRNA ligase from Xylella fastidiosa (strain M12).